Here is a 530-residue protein sequence, read N- to C-terminus: Autoinducer-2 kinase (530 aa).

This sequence belongs to the FGGY kinase family.

The protein resides in the cytoplasm. It catalyses the reaction (S)-4,5-dihydroxypentane-2,3-dione + ATP = (2S)-2-hydroxy-3,4-dioxopentyl phosphate + ADP + H(+). Functionally, catalyzes the phosphorylation of autoinducer-2 (AI-2) to phospho-AI-2, which subsequently inactivates the transcriptional regulator LsrR and leads to the transcription of the lsr operon. Phosphorylates the ring-open form of (S)-4,5-dihydroxypentane-2,3-dione (DPD), which is the precursor to all AI-2 signaling molecules, at the C5 position. The polypeptide is Autoinducer-2 kinase (Salmonella paratyphi B (strain ATCC BAA-1250 / SPB7)).